Consider the following 279-residue polypeptide: Tryptophan synthase alpha chain (279 aa).

Residues glutamate 50 and aspartate 61 each act as proton acceptor in the active site.

It belongs to the TrpA family. In terms of assembly, tetramer of two alpha and two beta chains.

The catalysed reaction is (1S,2R)-1-C-(indol-3-yl)glycerol 3-phosphate + L-serine = D-glyceraldehyde 3-phosphate + L-tryptophan + H2O. The protein operates within amino-acid biosynthesis; L-tryptophan biosynthesis; L-tryptophan from chorismate: step 5/5. In terms of biological role, the alpha subunit is responsible for the aldol cleavage of indoleglycerol phosphate to indole and glyceraldehyde 3-phosphate. The chain is Tryptophan synthase alpha chain from Brucella ovis (strain ATCC 25840 / 63/290 / NCTC 10512).